A 302-amino-acid chain; its full sequence is MKKNRLNLNGVVVINKVKDISSNKVLQQLKYLFNAQKAGHTGTLDPMATGVLPICFGRATKIAQYLLDADKEYIATIRLGIETDSGDAEGEIIAKSINIPELSAEYLETVLAKFRGDVVQIPPMYSALKYNGQPLYKLAREGKTVEVKSRNIKIYELELLEFNIDSLKIRVKCSKGTYIRSLAIDIGKTLGCGGHLIALQRTQSGPFKLSEAFRLEQLKDLSFEQKIASITNIESVFIDKPIYSLLEEEKDDLYKRGLFADKPHLDGTVRIYDVEKFVAIAEFDKGKLINKKFFDQDILISE.

The active-site Nucleophile is Asp-45.

The protein belongs to the pseudouridine synthase TruB family. Type 1 subfamily.

It catalyses the reaction uridine(55) in tRNA = pseudouridine(55) in tRNA. Functionally, responsible for synthesis of pseudouridine from uracil-55 in the psi GC loop of transfer RNAs. In Francisella tularensis subsp. tularensis (strain FSC 198), this protein is tRNA pseudouridine synthase B.